Reading from the N-terminus, the 310-residue chain is Phosphoribosylaminoimidazole-succinocarboxamide synthase (310 aa).

This sequence belongs to the SAICAR synthetase family.

It catalyses the reaction 5-amino-1-(5-phospho-D-ribosyl)imidazole-4-carboxylate + L-aspartate + ATP = (2S)-2-[5-amino-1-(5-phospho-beta-D-ribosyl)imidazole-4-carboxamido]succinate + ADP + phosphate + 2 H(+). The protein operates within purine metabolism; IMP biosynthesis via de novo pathway; 5-amino-1-(5-phospho-D-ribosyl)imidazole-4-carboxamide from 5-amino-1-(5-phospho-D-ribosyl)imidazole-4-carboxylate: step 1/2. This Dechloromonas aromatica (strain RCB) protein is Phosphoribosylaminoimidazole-succinocarboxamide synthase.